A 228-amino-acid chain; its full sequence is Upstream activation factor subunit UAF30 (228 aa).

One can recognise a DEK-C domain in the interval 1–56 (MAELNDYSTMIDILLSDMDLETVTTKKVRMALKEVYAIDVESQGKAINKLIRKHLD). Basic and acidic residues predominate over residues 89–111 (SKRSSGEEKNDSETKGTHVEKKK). Positions 89–118 (SKRSSGEEKNDSETKGTHVEKKKGTVSKSP) are disordered. The SWIB/MDM2 domain occupies 119–195 (ISTRKVTLSK…HKILASHMTE (77 aa)). A disordered region spans residues 209–228 (VRRKEKPIVSDSEQSDTKGI). Phosphoserine occurs at positions 218, 220, and 223.

Component of the UAF (upstream activation factor) complex which consists of UAF30, RRN5, RRN9, RRN10, and histones H3 and H4.

The protein localises to the nucleus. It is found in the nucleolus. Functionally, nonessential component of the UAF (upstream activation factor) complex which interacts with the upstream element of the RNA polymerase I promoter and forms a stable preinitiation complex. Together with SPT15/TBP UAF seems to stimulate basal transcription to a fully activated level. UAF30 seems to play a role in silencing transcription by RNA polymerase II. The protein is Upstream activation factor subunit UAF30 (UAF30) of Saccharomyces cerevisiae (strain ATCC 204508 / S288c) (Baker's yeast).